Here is a 233-residue protein sequence, read N- to C-terminus: U2 small nuclear ribonucleoprotein A' (233 aa).

LRR repeat units lie at residues 20-40 (KLTLLLRDLQITELENLAITQ), 42-63 (KYQVIDLSNNDLISLGNIPKRF), 65-86 (NLQCLLLSNNNISYIDDESFPS), and 89-110 (HITSITLFNNNIYQFQKSFKDK). An LRRCT domain is found at 122 to 160 (NPITEMENYRYFIIWLIPSLKVLDFKKVKQAERKTSEDM).

Belongs to the U2 small nuclear ribonucleoprotein A family. Associated with the spliceosome.

It is found in the nucleus. Involved in pre-mRNA splicing. This is U2 small nuclear ribonucleoprotein A' (LEA1) from Candida albicans (strain SC5314 / ATCC MYA-2876) (Yeast).